Here is a 134-residue protein sequence, read N- to C-terminus: Holo-[acyl-carrier-protein] synthase (134 aa).

Mg(2+)-binding residues include D8 and E57.

It belongs to the P-Pant transferase superfamily. AcpS family. It depends on Mg(2+) as a cofactor.

The protein resides in the cytoplasm. It catalyses the reaction apo-[ACP] + CoA = holo-[ACP] + adenosine 3',5'-bisphosphate + H(+). Transfers the 4'-phosphopantetheine moiety from coenzyme A to a Ser of acyl-carrier-protein. This is Holo-[acyl-carrier-protein] synthase from Rhizobium johnstonii (strain DSM 114642 / LMG 32736 / 3841) (Rhizobium leguminosarum bv. viciae).